A 384-amino-acid polypeptide reads, in one-letter code: uncharacterized protein (384 aa).

To S.pombe SpAC2E11.17.

This is an uncharacterized protein from Schizosaccharomyces pombe (strain 972 / ATCC 24843) (Fission yeast).